The following is a 350-amino-acid chain: Mannonate dehydratase (350 aa).

The protein belongs to the mannonate dehydratase family. It depends on Fe(2+) as a cofactor. Requires Mn(2+) as cofactor.

It carries out the reaction D-mannonate = 2-dehydro-3-deoxy-D-gluconate + H2O. Its pathway is carbohydrate metabolism; pentose and glucuronate interconversion. In terms of biological role, catalyzes the dehydration of D-mannonate. This chain is Mannonate dehydratase, found in Clostridium perfringens (strain 13 / Type A).